Here is a 202-residue protein sequence, read N- to C-terminus: Small ribosomal subunit protein uS4c (202 aa).

Residues 90–153 (MRLDNVIFRL…KSEAIISKNI (64 aa)) form the S4 RNA-binding domain.

Belongs to the universal ribosomal protein uS4 family. Part of the 30S ribosomal subunit. Contacts protein S5. The interaction surface between S4 and S5 is involved in control of translational fidelity.

It localises to the plastid. The protein resides in the chloroplast. In terms of biological role, one of the primary rRNA binding proteins, it binds directly to 16S rRNA where it nucleates assembly of the body of the 30S subunit. Its function is as follows. With S5 and S12 plays an important role in translational accuracy. This chain is Small ribosomal subunit protein uS4c (rps4), found in Hypopterygium didictyon.